Consider the following 129-residue polypeptide: uncharacterized protein (129 aa).

The signal sequence occupies residues 1-27 (MLMRKKKLLSRISFGSLFLLCGTILSA). A lipid anchor (N-palmitoyl cysteine) is attached at C28. C28 carries the S-diacylglycerol cysteine lipid modification.

Belongs to the MG439/MG440 family.

It is found in the cell membrane. This is an uncharacterized protein from Mycoplasma pneumoniae (strain ATCC 29342 / M129 / Subtype 1) (Mycoplasmoides pneumoniae).